Consider the following 173-residue polypeptide: UPF0316 protein Amet_0954 (173 aa).

Helical transmembrane passes span 3–23, 38–58, and 61–81; these read LVLGYLFIFVARVTDVGMGTV, AIGFVESIIYILAIGKVLEAL, and PVNILVYATGFAAGNYVGIYI.

This sequence belongs to the UPF0316 family.

Its subcellular location is the cell membrane. This is UPF0316 protein Amet_0954 from Alkaliphilus metalliredigens (strain QYMF).